Reading from the N-terminus, the 99-residue chain is CTP synthase (99 aa).

The 99-residue stretch at Thr-1–Lys-99 folds into the Glutamine amidotransferase type-1 domain. Arg-28 is a binding site for L-glutamine. Active-site residues include His-73 and Glu-75.

It belongs to the CTP synthase family. In terms of assembly, homotetramer.

It catalyses the reaction UTP + L-glutamine + ATP + H2O = CTP + L-glutamate + ADP + phosphate + 2 H(+). It carries out the reaction L-glutamine + H2O = L-glutamate + NH4(+). The catalysed reaction is UTP + NH4(+) + ATP = CTP + ADP + phosphate + 2 H(+). The protein operates within pyrimidine metabolism; CTP biosynthesis via de novo pathway; CTP from UDP: step 2/2. Its activity is regulated as follows. Allosterically activated by GTP, when glutamine is the substrate; GTP has no effect on the reaction when ammonia is the substrate. The allosteric effector GTP functions by stabilizing the protein conformation that binds the tetrahedral intermediate(s) formed during glutamine hydrolysis. Inhibited by the product CTP, via allosteric rather than competitive inhibition. Functionally, catalyzes the ATP-dependent amination of UTP to CTP with either L-glutamine or ammonia as the source of nitrogen. Regulates intracellular CTP levels through interactions with the four ribonucleotide triphosphates. The sequence is that of CTP synthase from Mycoplasma capricolum subsp. capripneumoniae.